The following is a 189-amino-acid chain: Elongation factor P (189 aa).

Lysine 35 carries the N6-(3,6-diaminohexanoyl)-5-hydroxylysine modification.

Belongs to the elongation factor P family. Post-translationally, may be beta-lysylated on the epsilon-amino group of Lys-35 by the combined action of EpmA and EpmB, and then hydroxylated on the C5 position of the same residue by EpmC (if this protein is present). Lysylation is critical for the stimulatory effect of EF-P on peptide-bond formation. The lysylation moiety may extend toward the peptidyltransferase center and stabilize the terminal 3-CCA end of the tRNA. Hydroxylation of the C5 position on Lys-35 may allow additional potential stabilizing hydrogen-bond interactions with the P-tRNA.

It localises to the cytoplasm. It participates in protein biosynthesis; polypeptide chain elongation. Its function is as follows. Involved in peptide bond synthesis. Alleviates ribosome stalling that occurs when 3 or more consecutive Pro residues or the sequence PPG is present in a protein, possibly by augmenting the peptidyl transferase activity of the ribosome. Modification of Lys-35 is required for alleviation. This Wigglesworthia glossinidia brevipalpis protein is Elongation factor P.